We begin with the raw amino-acid sequence, 309 residues long: NAD kinase (309 aa).

Asp-89 serves as the catalytic Proton acceptor. NAD(+) contacts are provided by residues 89-90 (DG), 163-164 (NE), His-174, Arg-191, Asp-193, and 204-209 (TAYSLS).

Belongs to the NAD kinase family. It depends on a divalent metal cation as a cofactor.

The protein resides in the cytoplasm. The enzyme catalyses NAD(+) + ATP = ADP + NADP(+) + H(+). Its function is as follows. Involved in the regulation of the intracellular balance of NAD and NADP, and is a key enzyme in the biosynthesis of NADP. Catalyzes specifically the phosphorylation on 2'-hydroxyl of the adenosine moiety of NAD to yield NADP. The protein is NAD kinase of Shewanella frigidimarina (strain NCIMB 400).